The sequence spans 60 residues: Large ribosomal subunit protein uL30 (60 aa).

It belongs to the universal ribosomal protein uL30 family. In terms of assembly, part of the 50S ribosomal subunit.

In Alcanivorax borkumensis (strain ATCC 700651 / DSM 11573 / NCIMB 13689 / SK2), this protein is Large ribosomal subunit protein uL30.